The chain runs to 391 residues: NAD(P)H-quinone oxidoreductase subunit H, chloroplastic (391 aa).

Belongs to the complex I 49 kDa subunit family. NDH is composed of at least 16 different subunits, 5 of which are encoded in the nucleus.

The protein resides in the plastid. It is found in the chloroplast thylakoid membrane. The catalysed reaction is a plastoquinone + NADH + (n+1) H(+)(in) = a plastoquinol + NAD(+) + n H(+)(out). The enzyme catalyses a plastoquinone + NADPH + (n+1) H(+)(in) = a plastoquinol + NADP(+) + n H(+)(out). In terms of biological role, NDH shuttles electrons from NAD(P)H:plastoquinone, via FMN and iron-sulfur (Fe-S) centers, to quinones in the photosynthetic chain and possibly in a chloroplast respiratory chain. The immediate electron acceptor for the enzyme in this species is believed to be plastoquinone. Couples the redox reaction to proton translocation, and thus conserves the redox energy in a proton gradient. The protein is NAD(P)H-quinone oxidoreductase subunit H, chloroplastic of Mesostigma viride (Green alga).